The chain runs to 31 residues: Potassium channel toxin alpha-KTx 5.4 (31 aa).

Disulfide bonds link Cys-3/Cys-21, Cys-8/Cys-26, and Cys-12/Cys-28. Residues 6 to 9 are [R/K]XCQ motif; it reads RRCE. Tyr-31 carries the tyrosine amide modification.

This sequence belongs to the short scorpion toxin superfamily. Potassium channel inhibitor family. Alpha-KTx 05 subfamily. As to expression, expressed by the venom gland.

Its subcellular location is the secreted. In terms of biological role, blocks small conductance calcium-activated potassium channels. Shows activity on KCa2.2/KCNN2 (IC(50)=0.0243 nM), KCa2.3/KCNN3 (IC(50)=1.7 nM), and KCa2.1/KCNN1 (IC(50)=42 nM). Induces cell death when tested on human T lymphoblastic leukemia Jurkat E6.1 and human breast cancer MDA-MB-231 cell lines which constituvely express KCa2.2/KCNN2, but not on human peripheral blood lymphocytes (which do not express KCa2.2/KCNN2). The chain is Potassium channel toxin alpha-KTx 5.4 from Hottentotta tamulus (Eastern Indian scorpion).